A 309-amino-acid chain; its full sequence is Homoserine O-succinyltransferase (309 aa).

Cysteine 142 functions as the Acyl-thioester intermediate in the catalytic mechanism. Residues lysine 163 and serine 192 each coordinate substrate. Histidine 235 (proton acceptor) is an active-site residue. Residue glutamate 237 is part of the active site. Arginine 249 contacts substrate.

It belongs to the MetA family.

The protein resides in the cytoplasm. It catalyses the reaction L-homoserine + succinyl-CoA = O-succinyl-L-homoserine + CoA. The protein operates within amino-acid biosynthesis; L-methionine biosynthesis via de novo pathway; O-succinyl-L-homoserine from L-homoserine: step 1/1. In terms of biological role, transfers a succinyl group from succinyl-CoA to L-homoserine, forming succinyl-L-homoserine. This chain is Homoserine O-succinyltransferase, found in Serratia proteamaculans (strain 568).